The chain runs to 1445 residues: ABC-type transporter FGSG_00046 (1445 aa).

A run of 11 helical transmembrane segments spans residues 21-41, 77-97, 119-138, 150-170, 187-207, 255-277, 297-317, 368-388, 392-412, 481-501, and 520-540; these read LFEECFLDILPWSLFLLMLLV, LILWASIAAFTTAGTVPAAAL, PSSLLGILTLLILLCDVTRV, ISILTTAALPINILLLVFESL, EIVGILNRSVFWWLNSLFILG, TLLRGGLCRLFTALFVTSQPLLL, YGLIGAYLVVYGGRAVFTALA, LQFVHEIWATPAEFGVAIFLL, VALGSLAPVIIIIVAIVGTVL, VFSTATATISPVLGFTIYVLM, and SLFSILSSSVYIFLTSVPAIF. Residues 259–541 enclose the ABC transmembrane type-1 1 domain; it reads GGLCRLFTAL…FLTSVPAIFS (283 aa). The region spanning 595–821 is the ABC transporter 1 domain; the sequence is IRDGSVRWKG…DEIEASTYSR (227 aa). Residue 627–634 coordinates ATP; sequence GSVGSGKS. Residues 803–850 are disordered; it reads RNTQKDMQDDEIEASTYSREQNGPKKQEEDANHESNQSPETSQEHELA. The segment covering 824–835 has biased composition (basic and acidic residues); the sequence is NGPKKQEEDANH. 6 consecutive transmembrane segments (helical) span residues 868 to 888, 912 to 932, 1004 to 1024, 1026 to 1046, 1116 to 1136, and 1147 to 1167; these read GMGFFALSFSLSLVYSFWQNF, IGVYILCAVLALVTHTVVTWF, IPLTGVQALFAFTSALVQLVM, SIGTKWMAITFPFIIAILAII, LTLVLNLVIGAMAILMMGVTI, and IGLAFVNLTTFSQSIQSLLTW. The region spanning 974 to 1173 is the ABC transmembrane type-1 2 domain; it reads HRAPMSYFES…LLTWWTMMEA (200 aa). The 232-residue stretch at 1210 to 1441 folds into the ABC transporter 2 domain; it reads IELKELSASY…DVSLFQDLFS (232 aa). 1244–1251 provides a ligand contact to ATP; that stretch reads GRTGSGKT.

The protein belongs to the ABC transporter superfamily. ABCC family.

The protein resides in the cell membrane. Its function is as follows. ABC-type transporter; part of the gene cluster that mediates the biosynthesis of gramillins A and B, bicyclic lipopeptides that induce cell death in maize leaves but not in wheat leaves. May be involved in the secretion of gramillins. The sequence is that of ABC-type transporter FGSG_00046 from Gibberella zeae (strain ATCC MYA-4620 / CBS 123657 / FGSC 9075 / NRRL 31084 / PH-1) (Wheat head blight fungus).